Reading from the N-terminus, the 294-residue chain is Putative isocitrate dehydrogenase [NAD] subunit-like 4 (294 aa).

It belongs to the isocitrate and isopropylmalate dehydrogenases family.

In terms of biological role, performs an essential role in the oxidative function of the citric acid cycle. The chain is Putative isocitrate dehydrogenase [NAD] subunit-like 4 (IDH4) from Arabidopsis thaliana (Mouse-ear cress).